The sequence spans 293 residues: Small ribosomal subunit biogenesis GTPase RsgA (293 aa).

The region spanning 63–223 (QNELVRPPIA…VADTPGFSAL (161 aa)) is the CP-type G domain. GTP contacts are provided by residues 112-115 (SKID) and 166-174 (GQSGVGKSS). Zn(2+) contacts are provided by Cys-247, Cys-252, His-254, and Cys-260.

The protein belongs to the TRAFAC class YlqF/YawG GTPase family. RsgA subfamily. As to quaternary structure, monomer. Associates with 30S ribosomal subunit, binds 16S rRNA. Zn(2+) is required as a cofactor.

Its subcellular location is the cytoplasm. Functionally, one of several proteins that assist in the late maturation steps of the functional core of the 30S ribosomal subunit. Helps release RbfA from mature subunits. May play a role in the assembly of ribosomal proteins into the subunit. Circularly permuted GTPase that catalyzes slow GTP hydrolysis, GTPase activity is stimulated by the 30S ribosomal subunit. This is Small ribosomal subunit biogenesis GTPase RsgA from Geobacillus kaustophilus (strain HTA426).